A 94-amino-acid chain; its full sequence is MTKSELIERLAGQQSHVPAKAVEDAVKEMLEHMAATLADGERIEIRGFGSFSLHYRAPRVGRNPKTGDKVELDGKYVPHFKPGKELRDRANIYG.

It belongs to the bacterial histone-like protein family. Heterodimer of an alpha and a beta chain.

This protein is one of the two subunits of integration host factor, a specific DNA-binding protein that functions in genetic recombination as well as in transcriptional and translational control. The polypeptide is Integration host factor subunit beta (Serratia proteamaculans (strain 568)).